Consider the following 173-residue polypeptide: Large ribosomal subunit protein uL10 (173 aa).

It belongs to the universal ribosomal protein uL10 family. Part of the ribosomal stalk of the 50S ribosomal subunit. The N-terminus interacts with L11 and the large rRNA to form the base of the stalk. The C-terminus forms an elongated spine to which L12 dimers bind in a sequential fashion forming a multimeric L10(L12)X complex.

Forms part of the ribosomal stalk, playing a central role in the interaction of the ribosome with GTP-bound translation factors. The sequence is that of Large ribosomal subunit protein uL10 from Micrococcus luteus (strain ATCC 4698 / DSM 20030 / JCM 1464 / CCM 169 / CCUG 5858 / IAM 1056 / NBRC 3333 / NCIMB 9278 / NCTC 2665 / VKM Ac-2230) (Micrococcus lysodeikticus).